The chain runs to 292 residues: 4-hydroxybenzoate octaprenyltransferase (292 aa).

Transmembrane regions (helical) follow at residues proline 23–glycine 43, proline 47–isoleucine 67, leucine 98–leucine 118, histidine 141–alanine 161, glycine 164–tyrosine 184, tyrosine 211–glycine 231, tyrosine 233–tyrosine 253, and phenylalanine 270–tryptophan 290.

The protein belongs to the UbiA prenyltransferase family. Mg(2+) is required as a cofactor.

It is found in the cell inner membrane. It carries out the reaction all-trans-octaprenyl diphosphate + 4-hydroxybenzoate = 4-hydroxy-3-(all-trans-octaprenyl)benzoate + diphosphate. Its pathway is cofactor biosynthesis; ubiquinone biosynthesis. Its function is as follows. Catalyzes the prenylation of para-hydroxybenzoate (PHB) with an all-trans polyprenyl group. Mediates the second step in the final reaction sequence of ubiquinone-8 (UQ-8) biosynthesis, which is the condensation of the polyisoprenoid side chain with PHB, generating the first membrane-bound Q intermediate 3-octaprenyl-4-hydroxybenzoate. The chain is 4-hydroxybenzoate octaprenyltransferase from Methylococcus capsulatus (strain ATCC 33009 / NCIMB 11132 / Bath).